The primary structure comprises 473 residues: Pyruvate kinase (473 aa).

Substrate is bound at residue arginine 32. Residues asparagine 34, serine 36, aspartate 66, and threonine 67 each coordinate K(+). Position 34-37 (34-37 (NFSH)) interacts with ATP. Residues arginine 73 and lysine 155 each coordinate ATP. Glutamate 221 lines the Mg(2+) pocket. 3 residues coordinate substrate: glycine 244, aspartate 245, and threonine 277. Aspartate 245 contacts Mg(2+).

Belongs to the pyruvate kinase family. In terms of assembly, homotetramer. It depends on Mg(2+) as a cofactor. The cofactor is K(+).

The catalysed reaction is pyruvate + ATP = phosphoenolpyruvate + ADP + H(+). Its pathway is carbohydrate degradation; glycolysis; pyruvate from D-glyceraldehyde 3-phosphate: step 5/5. The sequence is that of Pyruvate kinase (pyk) from Clostridium acetobutylicum (strain ATCC 824 / DSM 792 / JCM 1419 / IAM 19013 / LMG 5710 / NBRC 13948 / NRRL B-527 / VKM B-1787 / 2291 / W).